Here is a 672-residue protein sequence, read N- to C-terminus: UvrABC system protein B (672 aa).

The Helicase ATP-binding domain occupies 26-181; the sequence is AGLEDGLAYQ…ILQRLAELQY (156 aa). Residue 39-46 participates in ATP binding; the sequence is GVTGSGKT. A Beta-hairpin motif is present at residues 92-115; that stretch reads YYDYYQPEAYVPSSDTYIEKDASI. The Helicase C-terminal domain occupies 430-592; the sequence is QVDDLLSEIK…ITPKSIQKAV (163 aa). The UVR domain maps to 631 to 666; it reads AKELRKLEEQMYHHARNLEFEEAAAVRDKIQHIRKG.

It belongs to the UvrB family. Forms a heterotetramer with UvrA during the search for lesions. Interacts with UvrC in an incision complex.

It is found in the cytoplasm. In terms of biological role, the UvrABC repair system catalyzes the recognition and processing of DNA lesions. A damage recognition complex composed of 2 UvrA and 2 UvrB subunits scans DNA for abnormalities. Upon binding of the UvrA(2)B(2) complex to a putative damaged site, the DNA wraps around one UvrB monomer. DNA wrap is dependent on ATP binding by UvrB and probably causes local melting of the DNA helix, facilitating insertion of UvrB beta-hairpin between the DNA strands. Then UvrB probes one DNA strand for the presence of a lesion. If a lesion is found the UvrA subunits dissociate and the UvrB-DNA preincision complex is formed. This complex is subsequently bound by UvrC and the second UvrB is released. If no lesion is found, the DNA wraps around the other UvrB subunit that will check the other stand for damage. The sequence is that of UvrABC system protein B from Coxiella burnetii (strain Dugway 5J108-111).